Consider the following 183-residue polypeptide: Holliday junction branch migration complex subunit RuvA (183 aa).

The domain I stretch occupies residues 1–63 (MIVGLIGVVE…EDAHLLYGFL (63 aa)). The interval 64-141 (EEGEKILFER…IQDETKPMHN (78 aa)) is domain II. N141 is a region of interest (flexible linker). The tract at residues 141–183 (NEVFLALESLGFKSAEINKVLKTLKPSLSIEAAIKEALQQLRS) is domain III.

Belongs to the RuvA family. In terms of assembly, homotetramer. Forms an RuvA(8)-RuvB(12)-Holliday junction (HJ) complex. HJ DNA is sandwiched between 2 RuvA tetramers; dsDNA enters through RuvA and exits via RuvB. An RuvB hexamer assembles on each DNA strand where it exits the tetramer. Each RuvB hexamer is contacted by two RuvA subunits (via domain III) on 2 adjacent RuvB subunits; this complex drives branch migration. In the full resolvosome a probable DNA-RuvA(4)-RuvB(12)-RuvC(2) complex forms which resolves the HJ.

Its subcellular location is the cytoplasm. Its function is as follows. The RuvA-RuvB-RuvC complex processes Holliday junction (HJ) DNA during genetic recombination and DNA repair, while the RuvA-RuvB complex plays an important role in the rescue of blocked DNA replication forks via replication fork reversal (RFR). RuvA specifically binds to HJ cruciform DNA, conferring on it an open structure. The RuvB hexamer acts as an ATP-dependent pump, pulling dsDNA into and through the RuvAB complex. HJ branch migration allows RuvC to scan DNA until it finds its consensus sequence, where it cleaves and resolves the cruciform DNA. This is Holliday junction branch migration complex subunit RuvA from Helicobacter pylori (strain G27).